The chain runs to 77 residues: U8-lycotoxin-Ls1d (77 aa).

The signal sequence occupies residues methionine 1 to alanine 20. A propeptide spanning residues glutamine 21–lysine 26 is cleaved from the precursor.

Belongs to the neurotoxin 19 (CSTX) family. 08 (U8-Lctx) subfamily. In terms of processing, contains 4 disulfide bonds. As to expression, expressed by the venom gland.

It is found in the secreted. The polypeptide is U8-lycotoxin-Ls1d (Lycosa singoriensis (Wolf spider)).